The chain runs to 636 residues: Polyadenylate-binding protein 1 (636 aa).

At Met1 the chain carries N-acetylmethionine. RRM domains lie at 11-89 (ASLY…WSQR), 99-175 (GNIF…RFKS), 191-268 (TNVY…RAQK), and 294-370 (VNLY…LAQR). The segment at 166 to 289 (RKVFVGRFKS…FEQMKQDRIT (124 aa)) is UNR-binding. An N6-methyllysine modification is found at Lys299. Residue Ser315 is modified to Phosphoserine. At Thr319 the chain carries Phosphothreonine. 4 positions are modified to omega-N-methylarginine: Arg385, Arg419, Arg432, and Arg436. Omega-N-methylated arginine; by CARM1 is present on residues Arg455 and Arg460. Omega-N-methylarginine is present on residues Arg475 and Arg481. At Arg493 the chain carries Asymmetric dimethylarginine; alternate. Residue Arg493 is modified to Dimethylated arginine; alternate. At Arg493 the chain carries Omega-N-methylarginine; alternate. Arg506 carries the post-translational modification Omega-N-methylarginine. Lys512 is subject to N6-acetyllysine. At Arg518 the chain carries Omega-N-methylarginine. The region spanning 542–619 (QEPLTASMLA…AVAVLQAHQA (78 aa)) is the PABC domain.

It belongs to the polyadenylate-binding protein type-1 family. In terms of assembly, may form homodimers. Component of a multisubunit autoregulatory ribonucleoprotein complex (ARC), at least composed of IGF2BP1, PABPC1 and CSDE1. Directly interacts with IGF2BP1. Part of a complex associated with the FOS mCRD domain and consisting of HNRPD, SYNCRIP, PAIP1 and CSDE1/UNR. Interacts with PAIP1 and PAIP2 (via the PABPC1-interacting motifs PAM1 and PAM2). Interacts with PAIP1 with a 1:1 stoichiometry and with PAIP2 with a 1:2 stoichiometry. The interaction with CSDE1 is direct and RNA-independent. Found in a mRNP complex with YBX2. Interacts with TENT2/GLD2. Identified in the spliceosome C complex. Identified in a mRNP complex, at least composed of DHX9, DDX3X, ELAVL1, HNRNPU, IGF2BP1, ILF3, PABPC1, PCBP2, PTBP2, STAU1, STAU2, SYNCRIP and YBX1. The interaction with DDX3X is direct and RNA-independent. This interaction increases in stressed cells and decreases during cell recovery. Identified in a IGF2BP1-dependent mRNP granule complex containing untranslated mRNAs. Interacts with NXF1/TAP. Interacts with PIWIL1. Interacts with AGO1, AGO2, GSPT1 and GSPT2. Interacts with LARP4B. Interacts (via the second and third RRM domains and the C-terminus) with PAIP2B (via central acidic portion and C-terminus). Forms a complex with LARP1 and SHFL. Interacts with LARP4. Interacts with ZFC3H1 in a RNase-sensitive manner. Interacts with TRIM71 (via NHL repeats) in an RNA-dependent manner. Interacts with TENT5C; the interaction has no effect on TENT5C poly(A) polymerase function. Interacts with G3BP1 and G3BP2. Interacts with ENDOV; the interaction is RNA-dependent and stimulates ENDOV activity. Interacts with UPF1; the interaction is RNA-dependent. Interacts with IGF2BP2 and IGF2BP3. May interact with SETX. Interacts with RBM46. Interacts with PAN3 isoform 1/Pan3L and isoform 3/Pan3S (via N-terminus); interaction with isoform 1 is less efficient than with isoform 3. Post-translationally, phosphorylated by MAPKAPK2. Methylated by CARM1. Arg-493 is dimethylated, probably to asymmetric dimethylarginine.

The protein localises to the cytoplasm. Its subcellular location is the stress granule. It is found in the nucleus. The protein resides in the cell projection. It localises to the lamellipodium. Its function is as follows. Binds the poly(A) tail of mRNA, including that of its own transcript, and regulates processes of mRNA metabolism such as pre-mRNA splicing and mRNA stability. Its function in translational initiation regulation can either be enhanced by PAIP1 or repressed by PAIP2. Can probably bind to cytoplasmic RNA sequences other than poly(A) in vivo. Binds to N6-methyladenosine (m6A)-containing mRNAs and contributes to MYC stability by binding to m6A-containing MYC mRNAs. Involved in translationally coupled mRNA turnover. Implicated with other RNA-binding proteins in the cytoplasmic deadenylation/translational and decay interplay of the FOS mRNA mediated by the major coding-region determinant of instability (mCRD) domain. Involved in regulation of nonsense-mediated decay (NMD) of mRNAs containing premature stop codons; for the recognition of premature termination codons (PTC) and initiation of NMD a competitive interaction between UPF1 and PABPC1 with the ribosome-bound release factors is proposed. By binding to long poly(A) tails, may protect them from uridylation by ZCCHC6/ZCCHC11 and hence contribute to mRNA stability. The chain is Polyadenylate-binding protein 1 (Pabpc1) from Rattus norvegicus (Rat).